A 204-amino-acid polypeptide reads, in one-letter code: Gellan lyase (204 aa).

As to quaternary structure, multimer.

Its subcellular location is the secreted. It catalyses the reaction Eliminative cleavage of beta-D-glucopyranosyl-(1-&gt;4)-beta-D-glucopyranosyluronate bonds of gellan backbone releasing tetrasaccharides containing a 4-deoxy-4,5-unsaturated D-glucopyranosyluronic acid at the non-reducing end. The tetrasaccharide produced from deacetylated gellan is beta-D-4-deoxy-Delta(4)-GlcAp-(1-&gt;4)-beta-D-Glcp-(1-&gt;4)-alpha-L-Rhap-(1-&gt;3)-beta-D-Glcp.. Its activity is regulated as follows. Activity is stimulated by zinc, potassium, lithium, cobalt, sodium, calcium, iron, manganase, magnesium and mercury ions at a concentration of 1 mM, but inhibited by copper ions at a concentration of 1 mM. Activity is inhibited by potassium, sodium and magnesium ions at a concentration of 1 M. Activity is inhibited by urea, EDTA, dithiothreitol, p-CMB, PSF, natrium lauryl sulfate and N-bromosuccinimide. Functionally, cleaves the glycosidic bonds of gellan backbone and releases tetrasaccharide units of glucuronyl-glucosyl-rhamnosyl-glucose with unsaturated glucuronic acid at the non-reducing terminal. The enzyme is highly specific to the heteropolysaccharide gellan. The protein is Gellan lyase of Geobacillus stearothermophilus (Bacillus stearothermophilus).